Reading from the N-terminus, the 193-residue chain is Ion-translocating oxidoreductase complex subunit A (193 aa).

Transmembrane regions (helical) follow at residues 5–25 (LLLL…FLGL), 39–59 (IGMG…AYLV), 67–87 (LGIE…VVQF), 102–122 (LLGI…VALL), 134–154 (IIYG…FASM), and 171–191 (SIAM…TGLV).

It belongs to the NqrDE/RnfAE family. The complex is composed of six subunits: RnfA, RnfB, RnfC, RnfD, RnfE and RnfG.

Its subcellular location is the cell inner membrane. Part of a membrane-bound complex that couples electron transfer with translocation of ions across the membrane. This Vibrio cholerae serotype O1 (strain ATCC 39315 / El Tor Inaba N16961) protein is Ion-translocating oxidoreductase complex subunit A.